Consider the following 99-residue polypeptide: Nucleoid-associated protein UPA3_0088 (99 aa).

Belongs to the YbaB/EbfC family. As to quaternary structure, homodimer.

The protein resides in the cytoplasm. Its subcellular location is the nucleoid. Binds to DNA and alters its conformation. May be involved in regulation of gene expression, nucleoid organization and DNA protection. The polypeptide is Nucleoid-associated protein UPA3_0088 (Ureaplasma parvum serovar 3 (strain ATCC 27815 / 27 / NCTC 11736)).